The sequence spans 413 residues: ORC1-type DNA replication protein 10 (413 aa).

ATP contacts are provided by residues 63–67 (VGKTA), tyrosine 211, and arginine 223.

This sequence belongs to the CDC6/cdc18 family.

In terms of biological role, involved in regulation of DNA replication. The protein is ORC1-type DNA replication protein 10 (orc10) of Halobacterium salinarum (strain ATCC 700922 / JCM 11081 / NRC-1) (Halobacterium halobium).